The sequence spans 184 residues: Endoribonuclease YbeY (184 aa).

2 stretches are compositionally biased toward acidic residues: residues 1–11 (MTVEVGADENP) and 19–29 (DGAGDESDDED). The tract at residues 1–38 (MTVEVGADENPDFAHDETDGAGDESDDEDAQGRDPELD) is disordered. Zn(2+) contacts are provided by H146, H150, and H156.

This sequence belongs to the endoribonuclease YbeY family. Requires Zn(2+) as cofactor.

Its subcellular location is the cytoplasm. Its function is as follows. Single strand-specific metallo-endoribonuclease involved in late-stage 70S ribosome quality control and in maturation of the 3' terminus of the 16S rRNA. This is Endoribonuclease YbeY from Burkholderia pseudomallei (strain K96243).